The following is a 287-amino-acid chain: Phosphoribosylaminoimidazole-succinocarboxamide synthase (287 aa).

It belongs to the SAICAR synthetase family.

It catalyses the reaction 5-amino-1-(5-phospho-D-ribosyl)imidazole-4-carboxylate + L-aspartate + ATP = (2S)-2-[5-amino-1-(5-phospho-beta-D-ribosyl)imidazole-4-carboxamido]succinate + ADP + phosphate + 2 H(+). Its pathway is purine metabolism; IMP biosynthesis via de novo pathway; 5-amino-1-(5-phospho-D-ribosyl)imidazole-4-carboxamide from 5-amino-1-(5-phospho-D-ribosyl)imidazole-4-carboxylate: step 1/2. In Neisseria meningitidis serogroup C (strain 053442), this protein is Phosphoribosylaminoimidazole-succinocarboxamide synthase.